The primary structure comprises 888 residues: DNA mismatch repair protein MutS (888 aa).

The interval 249 to 271 (IGQRPPLSPPSREASGSTMAIDP) is disordered. Residue 638–645 (GPNMAGKS) participates in ATP binding.

The protein belongs to the DNA mismatch repair MutS family.

Functionally, this protein is involved in the repair of mismatches in DNA. It is possible that it carries out the mismatch recognition step. This protein has a weak ATPase activity. The polypeptide is DNA mismatch repair protein MutS (Nitrobacter winogradskyi (strain ATCC 25391 / DSM 10237 / CIP 104748 / NCIMB 11846 / Nb-255)).